The primary structure comprises 207 residues: Octanoyltransferase (207 aa).

In terms of domain architecture, BPL/LPL catalytic spans 27-203; sequence ADTEDELWVV…HLETQFTPKA (177 aa). Substrate-binding positions include 66–73, 133–135, and 146–148; these read RGGQITYH, SLG, and GLA. The active-site Acyl-thioester intermediate is the cysteine 164.

This sequence belongs to the LipB family.

It is found in the cytoplasm. The catalysed reaction is octanoyl-[ACP] + L-lysyl-[protein] = N(6)-octanoyl-L-lysyl-[protein] + holo-[ACP] + H(+). It functions in the pathway protein modification; protein lipoylation via endogenous pathway; protein N(6)-(lipoyl)lysine from octanoyl-[acyl-carrier-protein]: step 1/2. In terms of biological role, catalyzes the transfer of endogenously produced octanoic acid from octanoyl-acyl-carrier-protein onto the lipoyl domains of lipoate-dependent enzymes. Lipoyl-ACP can also act as a substrate although octanoyl-ACP is likely to be the physiological substrate. This is Octanoyltransferase from Neisseria meningitidis serogroup B (strain ATCC BAA-335 / MC58).